The primary structure comprises 339 residues: tRNA-dihydrouridine(20/20a) synthase (339 aa).

Residues 26–28 (PML) and Gln78 contribute to the FMN site. Cys108 (proton donor) is an active-site residue. FMN is bound by residues Lys147, His180, 220–222 (NGG), and 242–243 (GR).

Belongs to the Dus family. DusA subfamily. Requires FMN as cofactor.

It carries out the reaction 5,6-dihydrouridine(20) in tRNA + NADP(+) = uridine(20) in tRNA + NADPH + H(+). The catalysed reaction is 5,6-dihydrouridine(20) in tRNA + NAD(+) = uridine(20) in tRNA + NADH + H(+). The enzyme catalyses 5,6-dihydrouridine(20a) in tRNA + NADP(+) = uridine(20a) in tRNA + NADPH + H(+). It catalyses the reaction 5,6-dihydrouridine(20a) in tRNA + NAD(+) = uridine(20a) in tRNA + NADH + H(+). Catalyzes the synthesis of 5,6-dihydrouridine (D), a modified base found in the D-loop of most tRNAs, via the reduction of the C5-C6 double bond in target uridines. Specifically modifies U20 and U20a in tRNAs. This chain is tRNA-dihydrouridine(20/20a) synthase, found in Shigella flexneri.